Consider the following 402-residue polypeptide: Multidrug resistance protein MdtH (402 aa).

At Met-1 to Lys-12 the chain is on the cytoplasmic side. A helical membrane pass occupies residues Tyr-13–Ile-33. Residues Ser-34 to Glu-98 lie on the Periplasmic side of the membrane. The chain crosses the membrane as a helical span at residues Pro-99–Phe-116. Residues Asp-117–Ser-138 lie on the Cytoplasmic side of the membrane. A helical transmembrane segment spans residues Leu-139 to Leu-159. Topologically, residues Gln-160–Arg-164 are periplasmic. The chain crosses the membrane as a helical span at residues Leu-165–Leu-185. At Pro-186 to Tyr-213 the chain is on the cytoplasmic side. Residues Val-214–Met-234 traverse the membrane as a helical segment. At Val-235–Ser-243 the chain is on the periplasmic side. The chain crosses the membrane as a helical span at residues Ala-244–Ala-264. At Arg-265–Arg-276 the chain is on the cytoplasmic side. A helical transmembrane segment spans residues Leu-277–Leu-297. Residues Gln-298–Gln-299 lie on the Periplasmic side of the membrane. A helical membrane pass occupies residues Leu-300 to Thr-320. Residues Leu-321–Arg-339 are Cytoplasmic-facing. Residues Leu-340–Gly-360 form a helical membrane-spanning segment. Residues Lys-361–Glu-367 are Periplasmic-facing. The chain crosses the membrane as a helical span at residues Leu-368–Phe-388. Topologically, residues Ser-389–Ala-402 are cytoplasmic.

The protein belongs to the major facilitator superfamily. DHA1 family. MdtH (TC 2.A.1.2.21) subfamily.

It localises to the cell inner membrane. The polypeptide is Multidrug resistance protein MdtH (Shigella sonnei (strain Ss046)).